Reading from the N-terminus, the 598-residue chain is UvrABC system protein C (598 aa).

Residues 13–92 form the GIY-YIG domain; that stretch reads SSPGVYLMKD…IKKYQPRYNV (80 aa). The region spanning 206 to 241 is the UVR domain; the sequence is RSTISNLEKAIEKASQEQKFEHAAALYRTLTLIRQT.

It belongs to the UvrC family. As to quaternary structure, interacts with UvrB in an incision complex.

Its subcellular location is the cytoplasm. Its function is as follows. The UvrABC repair system catalyzes the recognition and processing of DNA lesions. UvrC both incises the 5' and 3' sides of the lesion. The N-terminal half is responsible for the 3' incision and the C-terminal half is responsible for the 5' incision. This chain is UvrABC system protein C, found in Chlamydia trachomatis serovar A (strain ATCC VR-571B / DSM 19440 / HAR-13).